The chain runs to 204 residues: Urease accessory protein UreE (204 aa).

Basic and acidic residues predominate over residues 172–190 (HGHAHSHDHDHDHDHDHQH). The disordered stretch occupies residues 172-204 (HGHAHSHDHDHDHDHDHQHGPGCTHGHHGHDHH).

The protein belongs to the UreE family.

The protein resides in the cytoplasm. Functionally, involved in urease metallocenter assembly. Binds nickel. Probably functions as a nickel donor during metallocenter assembly. This chain is Urease accessory protein UreE, found in Burkholderia orbicola (strain AU 1054).